The following is a 341-amino-acid chain: GTP 3',8-cyclase (341 aa).

The Radical SAM core domain maps to 17–235 (TYGRVATDLR…LRTRFELTAE (219 aa)). GTP is bound at residue Arg26. The [4Fe-4S] cluster site is built by Cys33 and Cys37. Tyr39 is an S-adenosyl-L-methionine binding site. Cys40 contributes to the [4Fe-4S] cluster binding site. Arg77 lines the GTP pocket. Gly81 is a binding site for S-adenosyl-L-methionine. Thr108 contacts GTP. Ser132 is an S-adenosyl-L-methionine binding site. A GTP-binding site is contributed by Lys169. Met203 contributes to the S-adenosyl-L-methionine binding site. [4Fe-4S] cluster is bound by residues Cys268 and Cys271. Residue 273 to 275 (RTR) coordinates GTP. Cys285 lines the [4Fe-4S] cluster pocket.

It belongs to the radical SAM superfamily. MoaA family. As to quaternary structure, monomer and homodimer. [4Fe-4S] cluster serves as cofactor.

It catalyses the reaction GTP + AH2 + S-adenosyl-L-methionine = (8S)-3',8-cyclo-7,8-dihydroguanosine 5'-triphosphate + 5'-deoxyadenosine + L-methionine + A + H(+). It participates in cofactor biosynthesis; molybdopterin biosynthesis. Its function is as follows. Catalyzes the cyclization of GTP to (8S)-3',8-cyclo-7,8-dihydroguanosine 5'-triphosphate. This chain is GTP 3',8-cyclase, found in Streptomyces coelicolor (strain ATCC BAA-471 / A3(2) / M145).